Consider the following 327-residue polypeptide: MSNPKVVVIGGGTGIPVVLKALRKEKIDLTAIVTVADDGGSSGRIRSAVNIAPPGDLRNVLIAMSDMPKFYADILQYRFDKSDGELAGHPLGNLIIAAVSEMQGSTYRAIQTLAQFFHVEGKIYPSSDAALTLHAVFKDGHEVLGESHIASYKGLIDHVYLTQTASGDSPVASKNVVKSIMEADTIVLGPGSLFTSILPNIVIPEICEALWKTSAKIVYVCNIMTQRGETEHFSDADHVRVLNEHIGTKVIDTVLVNIQEVPEEYMNTNKFDEYLVQVDHDFEALKAEEVNVISNNFLELRDGGAFHNGEAVAKEIVAISQRQEFRH.

The protein belongs to the gluconeogenesis factor family.

It localises to the cytoplasm. In terms of biological role, required for morphogenesis under gluconeogenic growth conditions. The sequence is that of Putative gluconeogenesis factor (yjiF) from Lactococcus lactis subsp. lactis (strain IL1403) (Streptococcus lactis).